The sequence spans 517 residues: Glucans biosynthesis protein G (517 aa).

Residues 1–28 form the signal peptide; that stretch reads MKHKLQMMKMRWLSAAVMLTLYTSSSWA.

This sequence belongs to the OpgD/OpgG family.

Its subcellular location is the periplasm. The protein operates within glycan metabolism; osmoregulated periplasmic glucan (OPG) biosynthesis. Its function is as follows. Involved in the biosynthesis of osmoregulated periplasmic glucans (OPGs). This is Glucans biosynthesis protein G from Escherichia coli O1:K1 / APEC.